The sequence spans 297 residues: tRNA-cytidine(32) 2-sulfurtransferase (297 aa).

The PP-loop motif motif lies at Ser-45–Ser-50. The [4Fe-4S] cluster site is built by Cys-120, Cys-123, and Cys-211.

This sequence belongs to the TtcA family. Homodimer. It depends on Mg(2+) as a cofactor. The cofactor is [4Fe-4S] cluster.

The protein resides in the cytoplasm. It catalyses the reaction cytidine(32) in tRNA + S-sulfanyl-L-cysteinyl-[cysteine desulfurase] + AH2 + ATP = 2-thiocytidine(32) in tRNA + L-cysteinyl-[cysteine desulfurase] + A + AMP + diphosphate + H(+). Its pathway is tRNA modification. Its function is as follows. Catalyzes the ATP-dependent 2-thiolation of cytidine in position 32 of tRNA, to form 2-thiocytidine (s(2)C32). The sulfur atoms are provided by the cysteine/cysteine desulfurase (IscS) system. This Vibrio campbellii (strain ATCC BAA-1116) protein is tRNA-cytidine(32) 2-sulfurtransferase.